Here is a 227-residue protein sequence, read N- to C-terminus: N-acetyltransferase family 8 member 7 (227 aa).

Transmembrane regions (helical) follow at residues 36–56 (MLLLPRTLLLLLGVPLTLFLA) and 58–78 (GSWLLVLLSILTLFLSLWFLA). The N-acetyltransferase domain maps to 61-220 (LLVLLSILTL…PMINLKYSLT (160 aa)).

Belongs to the camello family.

Its subcellular location is the membrane. It carries out the reaction L-lysyl-[protein] + acetyl-CoA = N(6)-acetyl-L-lysyl-[protein] + CoA + H(+). Functionally, has histone acetyltransferase activity in vitro, with specificity for histone H4. This is N-acetyltransferase family 8 member 7 from Mus musculus (Mouse).